A 1234-amino-acid chain; its full sequence is DNA-directed RNA polymerase subunit beta (1234 aa).

The tract at residues Val-1189–Asp-1212 is disordered. Residues Asn-1195–Asp-1212 are compositionally biased toward acidic residues.

Belongs to the RNA polymerase beta chain family. The RNAP catalytic core consists of 2 alpha, 1 beta, 1 beta' and 1 omega subunit. When a sigma factor is associated with the core the holoenzyme is formed, which can initiate transcription.

It catalyses the reaction RNA(n) + a ribonucleoside 5'-triphosphate = RNA(n+1) + diphosphate. Its function is as follows. DNA-dependent RNA polymerase catalyzes the transcription of DNA into RNA using the four ribonucleoside triphosphates as substrates. The protein is DNA-directed RNA polymerase subunit beta of Clostridium kluyveri (strain NBRC 12016).